A 355-amino-acid chain; its full sequence is Uroporphyrinogen decarboxylase (355 aa).

Residues 27 to 31 (RQAGR), Asp-77, Tyr-154, Thr-209, and His-327 contribute to the substrate site.

Belongs to the uroporphyrinogen decarboxylase family. As to quaternary structure, homodimer.

The protein localises to the cytoplasm. It carries out the reaction uroporphyrinogen III + 4 H(+) = coproporphyrinogen III + 4 CO2. It functions in the pathway porphyrin-containing compound metabolism; protoporphyrin-IX biosynthesis; coproporphyrinogen-III from 5-aminolevulinate: step 4/4. Functionally, catalyzes the decarboxylation of four acetate groups of uroporphyrinogen-III to yield coproporphyrinogen-III. The chain is Uroporphyrinogen decarboxylase from Yersinia pseudotuberculosis serotype O:1b (strain IP 31758).